The chain runs to 238 residues: Ribosomal RNA small subunit methyltransferase G (238 aa).

Residues G106, L111, 157 to 158 (IE), and R170 each bind S-adenosyl-L-methionine.

The protein belongs to the methyltransferase superfamily. RNA methyltransferase RsmG family.

It is found in the cytoplasm. It catalyses the reaction guanosine(527) in 16S rRNA + S-adenosyl-L-methionine = N(7)-methylguanosine(527) in 16S rRNA + S-adenosyl-L-homocysteine. In terms of biological role, specifically methylates the N7 position of guanine in position 527 of 16S rRNA. In Psychrobacter arcticus (strain DSM 17307 / VKM B-2377 / 273-4), this protein is Ribosomal RNA small subunit methyltransferase G.